A 129-amino-acid polypeptide reads, in one-letter code: Small ribosomal subunit protein uS11c (129 aa).

It belongs to the universal ribosomal protein uS11 family. As to quaternary structure, part of the 30S ribosomal subunit.

It localises to the plastid. The protein resides in the chloroplast. This is Small ribosomal subunit protein uS11c from Gracilaria tenuistipitata var. liui (Red alga).